A 246-amino-acid polypeptide reads, in one-letter code: MPHFIDLGVNVDHVATLRQARRGQEPDPITAASLAEQGGADGITFHLREDRRHISDRDVELFVQTVQVRTNFELACAADVLAICCRVQPDWALLVPESREEVTTEGGLDVAGDSGRIADAIQMLKDAGIATSLFLDPEPNQIEAAAKLQVDAVELHTGPYALARGAAVQHELRRLADTGKMIRDAGMRLHAGHGLNYVNVRPVAAIDGMAELNIGHSIVSRSVMVGMREAVAEMRRLLDSVTIAAQ.

Asn-10 contributes to the 3-amino-2-oxopropyl phosphate binding site. Position 12–13 (12–13) interacts with 1-deoxy-D-xylulose 5-phosphate; it reads DH. Arg-21 provides a ligand contact to 3-amino-2-oxopropyl phosphate. The active-site Proton acceptor is the His-46. 1-deoxy-D-xylulose 5-phosphate is bound by residues Arg-48 and His-53. Glu-73 (proton acceptor) is an active-site residue. Thr-103 contributes to the 1-deoxy-D-xylulose 5-phosphate binding site. His-193 functions as the Proton donor in the catalytic mechanism. Residues Gly-194 and 215–216 contribute to the 3-amino-2-oxopropyl phosphate site; that span reads GH.

Belongs to the PNP synthase family. Homooctamer; tetramer of dimers.

The protein localises to the cytoplasm. The enzyme catalyses 3-amino-2-oxopropyl phosphate + 1-deoxy-D-xylulose 5-phosphate = pyridoxine 5'-phosphate + phosphate + 2 H2O + H(+). The protein operates within cofactor biosynthesis; pyridoxine 5'-phosphate biosynthesis; pyridoxine 5'-phosphate from D-erythrose 4-phosphate: step 5/5. Functionally, catalyzes the complicated ring closure reaction between the two acyclic compounds 1-deoxy-D-xylulose-5-phosphate (DXP) and 3-amino-2-oxopropyl phosphate (1-amino-acetone-3-phosphate or AAP) to form pyridoxine 5'-phosphate (PNP) and inorganic phosphate. In Rhodopirellula baltica (strain DSM 10527 / NCIMB 13988 / SH1), this protein is Pyridoxine 5'-phosphate synthase.